Consider the following 177-residue polypeptide: Large ribosomal subunit protein uL6 (177 aa).

This sequence belongs to the universal ribosomal protein uL6 family. Part of the 50S ribosomal subunit.

Functionally, this protein binds to the 23S rRNA, and is important in its secondary structure. It is located near the subunit interface in the base of the L7/L12 stalk, and near the tRNA binding site of the peptidyltransferase center. This chain is Large ribosomal subunit protein uL6, found in Xanthobacter autotrophicus (strain ATCC BAA-1158 / Py2).